Here is a 367-residue protein sequence, read N- to C-terminus: MSLNRILVINPGSTSTKIGVFDNERPVLEETIRHDEEQIGKYKRIIDQYEFRKETILEVLHSHGINISKLNAVCGRGGLLRPIEGGTYTVNDAMLEDLKNGFSGHHASNLGGILAYEIASGLNIPAFIVDPVVVDEMEPVARISGIAGMERKSIFHALNQKAVARKVAEELNHKYEDLNLLVTHMGGGITVGAHKKGKVIDVNNGLNGEGPFSPERAGTVPVGQLVEMCFSGEYYRDEMVKKLVGQGGLVSLIGTNDAIKVEQMVEKGDPEATLIYKAMAYQVAKEIGGASAVLHGKIDAIVLTGGLAYSKILVDEIKERVDWIADVIVHPGEDELQALAEGALRVLREEEAPKEYIVREKETVARG.

This sequence belongs to the acetokinase family.

It is found in the cytoplasm. The enzyme catalyses butanoate + ATP = butanoyl phosphate + ADP. This is Probable butyrate kinase from Bacillus cereus (strain ATCC 10987 / NRS 248).